A 287-amino-acid polypeptide reads, in one-letter code: Inorganic pyrophosphatase (287 aa).

Diphosphate is bound at residue Arg-80. Mg(2+)-binding residues include Asp-117, Asp-122, and Asp-154.

Belongs to the PPase family. Mg(2+) serves as cofactor.

It localises to the cytoplasm. The catalysed reaction is diphosphate + H2O = 2 phosphate + H(+). The polypeptide is Inorganic pyrophosphatase (IPP1) (Yarrowia lipolytica (strain CLIB 122 / E 150) (Yeast)).